Consider the following 140-residue polypeptide: Nucleoside diphosphate kinase (140 aa).

Positions 11, 59, 87, 93, 104, and 114 each coordinate ATP. Catalysis depends on histidine 117, which acts as the Pros-phosphohistidine intermediate.

The protein belongs to the NDK family. Homotetramer. Mg(2+) serves as cofactor.

It is found in the cytoplasm. It carries out the reaction a 2'-deoxyribonucleoside 5'-diphosphate + ATP = a 2'-deoxyribonucleoside 5'-triphosphate + ADP. It catalyses the reaction a ribonucleoside 5'-diphosphate + ATP = a ribonucleoside 5'-triphosphate + ADP. Functionally, major role in the synthesis of nucleoside triphosphates other than ATP. The ATP gamma phosphate is transferred to the NDP beta phosphate via a ping-pong mechanism, using a phosphorylated active-site intermediate. This Francisella philomiragia subsp. philomiragia (strain ATCC 25017 / CCUG 19701 / FSC 153 / O#319-036) protein is Nucleoside diphosphate kinase.